We begin with the raw amino-acid sequence, 713 residues long: MGDEDWEAEILKPHVSSYVPVFEKDKYSSGANGDTFNRTSASSSEMEDGPSGRDHFMRSGFSSGRNLGNRDIGESSKRETTSTTGGFGRGKGFGNRGFLNNKFEEGDSSGFWKESTNDCEDTQTRSRGFSKRGGYPDGNDSEASGPFRRGGRDSEYDQDQGSQRGGGLFGSRKPAASDSGSGDTFQSRSGNARGAYKGLNEEVVTGSGKNSWKSEAEGGESSDIQGPKVTYIPPPPPEDEDSIFAHYQTGINFDKYDTILVEVSGHDAPPAILTFEEANLCQTLNNNIAKAGYTKLTPVQKYSIPIVLAGRDLMACAQTGSGKTAAFLLPILAHMMRDGITASRFKELQEPECIIVAPTRELINQIYLEARKFSFGTCVRAVVIYGGTQFGHSIRQIVQGCNILCATPGRLMDIIGKEKIGLKQVKYLVLDEADRMLDMGFGPEMKKLISCPGMPSKEQRQTLLFSATFPEEIQRLAGEFLKSNYLFVAVGQVGGACRDVQQSILQVGPVFKKRKLVEILRNIGDERPMVFVETKKKADFIATFLCQEKISTTSIHGDREQREREQALGDFRCGKCPVLVATSVAARGLDIENVQHVINFNLPSTIDEYVHRIGRTGRCGNTGRAISFFDTESDNHLAQPLVKVLSDAQQDVPAWLEEIAFSSYAPPSFSNSTRGAVFASFDTRKNFQGKNTLNTAGISSAQAPNPVDDESWD.

The segment at 23-240 is disordered; that stretch reads EKDKYSSGAN…YIPPPPPEDE (218 aa). Polar residues predominate over residues 29–44; sequence SGANGDTFNRTSASSS. Basic and acidic residues predominate over residues 71 to 80; that stretch reads DIGESSKRET. Gly residues predominate over residues 85–95; the sequence is GGFGRGKGFGN. The segment covering 178–190 has biased composition (polar residues); it reads DSGSGDTFQSRSG. Residues serine 207 and serine 211 each carry the phosphoserine modification. Positions 213-232 are interaction with RANBP9; that stretch reads KSEAEGGESSDIQGPKVTYI. The Q motif motif lies at 273 to 301; sequence LTFEEANLCQTLNNNIAKAGYTKLTPVQK. The 184-residue stretch at 304-487 folds into the Helicase ATP-binding domain; sequence IPIVLAGRDL…GEFLKSNYLF (184 aa). 317–324 contributes to the ATP binding site; that stretch reads AQTGSGKT. The DEAD box motif lies at 431 to 434; the sequence is DEAD. The 146-residue stretch at 515–660 folds into the Helicase C-terminal domain; it reads KLVEILRNIG…DVPAWLEEIA (146 aa). Residues 689-703 show a composition bias toward polar residues; sequence GKNTLNTAGISSAQA. The segment at 689-713 is disordered; sequence GKNTLNTAGISSAQAPNPVDDESWD. Phosphoserine is present on serine 711.

Belongs to the DEAD box helicase family. DDX4/VASA subfamily. In terms of assembly, found in a mRNP complex, at least composed of TDRD1, TDRD6, TDRD7 and DDX4. Interacts with RANBP9. Interacts with RANBP10. Interacts with PIWIL2 and MAEL. Interacts with BMAL1 and CLOCK. Interacts with Tex19.1 and, probably, Tex19.2. Interacts with RBM46. Testis.

It localises to the cytoplasm. The protein resides in the perinuclear region. It catalyses the reaction ATP + H2O = ADP + phosphate + H(+). Functionally, ATP-dependent RNA helicase required during spermatogenesis to repress transposable elements and preventing their mobilization, which is essential for the germline integrity. Acts via the piRNA metabolic process, which mediates the repression of transposable elements during meiosis by forming complexes composed of piRNAs and Piwi proteins and governs the methylation and subsequent repression of transposons. Involved in the secondary piRNAs metabolic process, the production of piRNAs in fetal male germ cells through a ping-pong amplification cycle. Required for PIWIL2 slicing-triggered piRNA biogenesis: helicase activity enables utilization of one of the slice cleavage fragments generated by PIWIL2 and processing these pre-piRNAs into piRNAs. This chain is Probable ATP-dependent RNA helicase DDX4 (Ddx4), found in Rattus norvegicus (Rat).